Consider the following 346-residue polypeptide: Methionine import ATP-binding protein MetN 1 (346 aa).

The ABC transporter domain maps to 2–241 (IELKNVSKVF…PQHVTTKKFV (240 aa)). 38–45 (GYSGAGKS) serves as a coordination point for ATP.

The protein belongs to the ABC transporter superfamily. Methionine importer (TC 3.A.1.24) family. As to quaternary structure, the complex is composed of two ATP-binding proteins (MetN), two transmembrane proteins (MetI) and a solute-binding protein (MetQ).

It localises to the cell membrane. It catalyses the reaction L-methionine(out) + ATP + H2O = L-methionine(in) + ADP + phosphate + H(+). It carries out the reaction D-methionine(out) + ATP + H2O = D-methionine(in) + ADP + phosphate + H(+). Functionally, part of the ABC transporter complex MetNIQ involved in methionine import. Responsible for energy coupling to the transport system. The sequence is that of Methionine import ATP-binding protein MetN 1 from Bacillus anthracis.